Consider the following 340-residue polypeptide: Guanine nucleotide-binding protein G(I)/G(S)/G(T) subunit beta-2 (340 aa).

The residue at position 2 (S2) is an N-acetylserine. WD repeat units follow at residues 53-83 (GHLA…IIWD), 95-125 (LRSS…SIYS), 141-170 (GHTG…ALWD), 182-212 (GHSG…KLWD), 224-254 (GHES…RLFD), 268-298 (NIIC…NIWD), and 310-340 (GHDN…KIWN). Position 239 is a phosphotyrosine (Y239).

Belongs to the WD repeat G protein beta family. As to quaternary structure, g proteins are composed of 3 units, alpha, beta and gamma. In this context, interacts with GNAI2 and GNG2. Interacts with ARHGEF18 and RASD2. Interacts with ATXN10. Interacts with SCN8A. Expressed in all cardiac subcompartments and in the brain, with highest levels in the atrioventricular node and brain.

The protein resides in the cytoplasm. It is found in the perinuclear region. The protein localises to the cell membrane. In terms of biological role, guanine nucleotide-binding proteins (G proteins) are involved as a modulator or transducer in various transmembrane signaling systems. The beta and gamma chains are required for the GTPase activity, for replacement of GDP by GTP, and for G protein-effector interaction. The polypeptide is Guanine nucleotide-binding protein G(I)/G(S)/G(T) subunit beta-2 (GNB2) (Homo sapiens (Human)).